The primary structure comprises 465 residues: Apolipoprotein N-acyltransferase (465 aa).

6 helical membrane-spanning segments follow: residues 12–32 (AVLGGLLAGLAPGVAGPLSML), 49–69 (ALWGLFGVLLSHRWLLGLHPL), 80–100 (LPVAVAIWLSCGVAAALLLLL), 122–142 (LLALVWGAAELLLEGSPLFWI), 161–181 (WLGSGGLATLQLLWGWGLWQL), and 189–209 (CAWWLISLLLAHAMGALSLSP). The region spanning 221 to 448 (WQPAIPTREK…DAVAAAELQR (228 aa)) is the CN hydrolase domain. Glu-262 acts as the Proton acceptor in catalysis. Lys-312 is a catalytic residue. Cys-360 (nucleophile) is an active-site residue.

Belongs to the CN hydrolase family. Apolipoprotein N-acyltransferase subfamily.

It localises to the cell inner membrane. The catalysed reaction is N-terminal S-1,2-diacyl-sn-glyceryl-L-cysteinyl-[lipoprotein] + a glycerophospholipid = N-acyl-S-1,2-diacyl-sn-glyceryl-L-cysteinyl-[lipoprotein] + a 2-acyl-sn-glycero-3-phospholipid + H(+). The protein operates within protein modification; lipoprotein biosynthesis (N-acyl transfer). Catalyzes the phospholipid dependent N-acylation of the N-terminal cysteine of apolipoprotein, the last step in lipoprotein maturation. The sequence is that of Apolipoprotein N-acyltransferase from Parasynechococcus marenigrum (strain WH8102).